Consider the following 221-residue polypeptide: ATP phosphoribosyltransferase (221 aa).

This sequence belongs to the ATP phosphoribosyltransferase family. Short subfamily. Heteromultimer composed of HisG and HisZ subunits.

The protein resides in the cytoplasm. It carries out the reaction 1-(5-phospho-beta-D-ribosyl)-ATP + diphosphate = 5-phospho-alpha-D-ribose 1-diphosphate + ATP. Its pathway is amino-acid biosynthesis; L-histidine biosynthesis; L-histidine from 5-phospho-alpha-D-ribose 1-diphosphate: step 1/9. Catalyzes the condensation of ATP and 5-phosphoribose 1-diphosphate to form N'-(5'-phosphoribosyl)-ATP (PR-ATP). Has a crucial role in the pathway because the rate of histidine biosynthesis seems to be controlled primarily by regulation of HisG enzymatic activity. The protein is ATP phosphoribosyltransferase of Carboxydothermus hydrogenoformans (strain ATCC BAA-161 / DSM 6008 / Z-2901).